The following is an 802-amino-acid chain: Copper-exporting P-type ATPase (802 aa).

HMA domains lie at 5–70 (KKTT…YGVA) and 72–138 (ETVE…YDAS). 4 residues coordinate Cu(+): C16, C19, C83, and C86. 6 helical membrane-spanning segments follow: residues 161–181 (LIIS…HLFN), 192–212 (WFQF…FYVG), 224–244 (MDVL…YEMV), 256–276 (LYFE…YLEA), 411–431 (YFVP…ITLV), and 438–458 (PALV…LGLA). Residue D495 is the 4-aspartylphosphate intermediate of the active site. The Mg(2+) site is built by D690 and D694. Helical transmembrane passes span 748 to 767 (LFWA…LGLL) and 771 to 790 (VAGA…ALRL).

Belongs to the cation transport ATPase (P-type) (TC 3.A.3) family. Type IB subfamily.

It localises to the cell membrane. It catalyses the reaction Cu(+)(in) + ATP + H2O = Cu(+)(out) + ADP + phosphate + H(+). Involved in copper export. The protein is Copper-exporting P-type ATPase (copA) of Staphylococcus aureus (strain USA300 / TCH1516).